Here is a 668-residue protein sequence, read N- to C-terminus: S-adenosyl-L-methionine-dependent tRNA 4-demethylwyosine synthase TYW1B (668 aa).

The Flavodoxin-like domain occupies 37–191; it reads CVQIVIEMQG…NFRAWKTKFI (155 aa). Residues 43-47 and 130-162 contribute to the FMN site; these read EMQGF and VFGL…HRVM. The tract at residues 202-269 is disordered; sequence RKKSCGGHCK…QSLNSIVDVE (68 aa). 2 stretches are compositionally biased toward basic and acidic residues: residues 213–223 and 233–243; these read GKCESHQHGSE and DELHHRDTKEE. The segment covering 244-255 has biased composition (acidic residues); that stretch reads EPFESSSEEEFG. Residues 336–580 form the Radical SAM core domain; it reads LWNESHRCME…VDLIPEYEIA (245 aa). Positions 352, 356, and 359 each coordinate [4Fe-4S] cluster.

Belongs to the TYW1 family. Requires [4Fe-4S] cluster as cofactor.

The enzyme catalyses N(1)-methylguanosine(37) in tRNA(Phe) + pyruvate + S-adenosyl-L-methionine = 4-demethylwyosine(37) in tRNA(Phe) + 5'-deoxyadenosine + L-methionine + CO2 + H2O. The protein operates within tRNA modification; wybutosine-tRNA(Phe) biosynthesis. Probable component of the wybutosine biosynthesis pathway. Wybutosine is a hyper modified guanosine with a tricyclic base found at the 3'-position adjacent to the anticodon of eukaryotic phenylalanine tRNA. Catalyzes the condensation of N-methylguanine with 2 carbon atoms from pyruvate to form the tricyclic 4-demethylwyosine, an intermediate in wybutosine biosynthesis. The sequence is that of S-adenosyl-L-methionine-dependent tRNA 4-demethylwyosine synthase TYW1B (TYW1B) from Homo sapiens (Human).